The chain runs to 356 residues: Protein RecA (356 aa).

67–74 (GPESSGKT) lines the ATP pocket.

It belongs to the RecA family.

Its subcellular location is the cytoplasm. Its function is as follows. Can catalyze the hydrolysis of ATP in the presence of single-stranded DNA, the ATP-dependent uptake of single-stranded DNA by duplex DNA, and the ATP-dependent hybridization of homologous single-stranded DNAs. It interacts with LexA causing its activation and leading to its autocatalytic cleavage. This is Protein RecA from Yersinia pseudotuberculosis serotype I (strain IP32953).